A 450-amino-acid chain; its full sequence is Sorting nexin-4 (450 aa).

M1 bears the N-acetylmethionine mark. A disordered region spans residues 1 to 53; that stretch reads MEQAAPDPERLWQPAPLEPLSHPDAGLESMVGEETKGARDEGPGDGTMTENNF. The span at 33–42 shows a compositional bias: basic and acidic residues; the sequence is EETKGARDEG. Positions 61 to 187 constitute a PX domain; that stretch reads SVSEAEKRTG…YLFLTQEGNW (127 aa). Residues R106, S108, K132, and R154 each coordinate a 1,2-diacyl-sn-glycero-3-phospho-(1D-myo-inositol-3-phosphate).

It belongs to the sorting nexin family. Heterodimer; heterodimerizes with SNX7 or SNX30. Interacts with WWC1/KIBRA. Identified in a complex with WWC1/KIBRA and dynein components DYNLL1 and DYNC1I2. Interacts with BIN1.

It is found in the early endosome. The protein localises to the early endosome membrane. In terms of biological role, involved in the regulation of endocytosis and in several stages of intracellular trafficking. Plays a role in recycling endocytosed transferrin receptor and prevent its degradation. Involved in autophagosome assembly by regulating trafficking and recycling of phospholipid scramblase ATG9A. The chain is Sorting nexin-4 from Bos taurus (Bovine).